The following is a 537-amino-acid chain: Proline--tRNA ligase (537 aa).

This sequence belongs to the class-II aminoacyl-tRNA synthetase family. ProS type 3 subfamily. Homodimer.

It localises to the cytoplasm. It catalyses the reaction tRNA(Pro) + L-proline + ATP = L-prolyl-tRNA(Pro) + AMP + diphosphate. In terms of biological role, catalyzes the attachment of proline to tRNA(Pro) in a two-step reaction: proline is first activated by ATP to form Pro-AMP and then transferred to the acceptor end of tRNA(Pro). The chain is Proline--tRNA ligase from Nanoarchaeum equitans (strain Kin4-M).